A 242-amino-acid polypeptide reads, in one-letter code: 7-cyano-7-deazaguanine synthase (242 aa).

An ATP-binding site is contributed by 14 to 24 (FSGGQDSATCL). Residues C202, C217, C220, and C223 each coordinate Zn(2+).

The protein belongs to the QueC family. The cofactor is Zn(2+).

The catalysed reaction is 7-carboxy-7-deazaguanine + NH4(+) + ATP = 7-cyano-7-deazaguanine + ADP + phosphate + H2O + H(+). It participates in purine metabolism; 7-cyano-7-deazaguanine biosynthesis. In terms of biological role, catalyzes the ATP-dependent conversion of 7-carboxy-7-deazaguanine (CDG) to 7-cyano-7-deazaguanine (preQ(0)). This Rhodopseudomonas palustris (strain BisA53) protein is 7-cyano-7-deazaguanine synthase.